The primary structure comprises 219 residues: UPF0376 protein C36C5.12 (219 aa).

Topologically, residues Met1 to Ser20 are cytoplasmic. A helical; Signal-anchor for type II membrane protein transmembrane segment spans residues Phe21–Ala43. Residues Glu44–Gly219 are Extracellular-facing. N-linked (GlcNAc...) asparagine glycans are attached at residues Asn104 and Asn204.

It belongs to the UPF0376 family.

It is found in the membrane. The protein is UPF0376 protein C36C5.12 of Caenorhabditis elegans.